Reading from the N-terminus, the 163-residue chain is Cyclic pyranopterin monophosphate synthase (163 aa).

Substrate is bound by residues methionine 75–histidine 77 and methionine 113–glutamate 114. Aspartate 128 is an active-site residue.

This sequence belongs to the MoaC family. In terms of assembly, homohexamer; trimer of dimers.

The catalysed reaction is (8S)-3',8-cyclo-7,8-dihydroguanosine 5'-triphosphate = cyclic pyranopterin phosphate + diphosphate. It participates in cofactor biosynthesis; molybdopterin biosynthesis. Its function is as follows. Catalyzes the conversion of (8S)-3',8-cyclo-7,8-dihydroguanosine 5'-triphosphate to cyclic pyranopterin monophosphate (cPMP). The chain is Cyclic pyranopterin monophosphate synthase from Desulforapulum autotrophicum (strain ATCC 43914 / DSM 3382 / VKM B-1955 / HRM2) (Desulfobacterium autotrophicum).